The primary structure comprises 130 residues: Sec-independent protein translocase protein TatB (130 aa).

A helical membrane pass occupies residues 1-21 (MFDIGFTELTLIFIIGLVVLG). 2 stretches are compositionally biased toward basic and acidic residues: residues 57-67 (QDMQERMEKQM) and 111-130 (PSDK…RRHD). The tract at residues 57–130 (QDMQERMEKQ…NHDQDSRRHD (74 aa)) is disordered.

This sequence belongs to the TatB family. As to quaternary structure, the Tat system comprises two distinct complexes: a TatABC complex, containing multiple copies of TatA, TatB and TatC subunits, and a separate TatA complex, containing only TatA subunits. Substrates initially bind to the TatABC complex, which probably triggers association of the separate TatA complex to form the active translocon.

The protein localises to the cell inner membrane. In terms of biological role, part of the twin-arginine translocation (Tat) system that transports large folded proteins containing a characteristic twin-arginine motif in their signal peptide across membranes. Together with TatC, TatB is part of a receptor directly interacting with Tat signal peptides. TatB may form an oligomeric binding site that transiently accommodates folded Tat precursor proteins before their translocation. This is Sec-independent protein translocase protein TatB from Alcanivorax borkumensis (strain ATCC 700651 / DSM 11573 / NCIMB 13689 / SK2).